The sequence spans 466 residues: Asparagine--tRNA ligase (466 aa).

This sequence belongs to the class-II aminoacyl-tRNA synthetase family. In terms of assembly, homodimer.

Its subcellular location is the cytoplasm. It catalyses the reaction tRNA(Asn) + L-asparagine + ATP = L-asparaginyl-tRNA(Asn) + AMP + diphosphate + H(+). This is Asparagine--tRNA ligase from Syntrophobacter fumaroxidans (strain DSM 10017 / MPOB).